The chain runs to 402 residues: MKITGARVIVTCPDRNFVTLKIETDEGLTGIGDATLNGRELAVASYLTDHVIPCLIGRDAHRIEDIWNYLYRGAYWRRGPVTMSAIAAVDTALWDIKAKAAGLPLYQLLGGRSRDGVMVYGHANGRDIEETTDEVARYIEMGYRAIRAQTGVPGLASTYGVSSDKMYYEPADAALPTENIWSTEKYLDHVPKLFDRLRDRFGFDHHLLHDVHHRLTPIEAGRLGKSLEPYRLFWMEDATPAENQEAFRLIRQHTVTPLAVGEVFNTIWDAKDLIQNQLIDYIRATVVHAGGISHLRRIADLAALYQVRTGCHGATDLSPVCMGAALHFDIWVPNFGVQEYMRHTEATDAVFPHAYSFASGYMTPGDVPGHGVEIDEKLAAKYPYKPCSLPVNRLEDGTLWHW.

Substrate contacts are provided by asparagine 37 and histidine 122. Residue tyrosine 159 is the Proton donor/acceptor of the active site. Aspartate 210 is a Mg(2+) binding site. Histidine 212 acts as the Proton donor/acceptor in catalysis. Positions 236 and 262 each coordinate Mg(2+). Substrate is bound by residues glutamate 262, arginine 283, histidine 312, aspartate 316, and glutamate 339.

It belongs to the mandelate racemase/muconate lactonizing enzyme family. GalD subfamily. Requires Mg(2+) as cofactor.

It catalyses the reaction D-mannonate = 2-dehydro-3-deoxy-D-gluconate + H2O. It functions in the pathway carbohydrate metabolism; pentose and glucuronate interconversion. In terms of biological role, catalyzes the dehydration of D-mannonate. Has no detectable activity with a panel of 70 other acid sugars (in vitro). This chain is D-mannonate dehydratase, found in Rhizorhabdus wittichii (strain DSM 6014 / CCUG 31198 / JCM 15750 / NBRC 105917 / EY 4224 / RW1) (Sphingomonas wittichii).